Consider the following 197-residue polypeptide: Shikimate kinase (197 aa).

Position 15–20 (15–20) interacts with ATP; the sequence is GSGKSS. S19 contributes to the Mg(2+) binding site. 3 residues coordinate substrate: D37, R61, and G83. R121 is a binding site for ATP. Residue R148 coordinates substrate.

Belongs to the shikimate kinase family. As to quaternary structure, monomer. It depends on Mg(2+) as a cofactor.

Its subcellular location is the cytoplasm. It carries out the reaction shikimate + ATP = 3-phosphoshikimate + ADP + H(+). The protein operates within metabolic intermediate biosynthesis; chorismate biosynthesis; chorismate from D-erythrose 4-phosphate and phosphoenolpyruvate: step 5/7. Catalyzes the specific phosphorylation of the 3-hydroxyl group of shikimic acid using ATP as a cosubstrate. This is Shikimate kinase from Chlorobium phaeovibrioides (strain DSM 265 / 1930) (Prosthecochloris vibrioformis (strain DSM 265)).